We begin with the raw amino-acid sequence, 453 residues long: GTPase Der (453 aa).

EngA-type G domains are found at residues 3–167 and 187–360; these read FTLA…PAQT and IKVA…AVWN. GTP contacts are provided by residues 9-16, 56-60, 119-122, 193-200, 240-244, and 305-308; these read GRPNVGKS, DTAGL, NKSE, GRPNAGKS, and NKSD. Residues 361–445 form the KH-like domain; it reads TRIPTNPLNR…PIRLTLREKG (85 aa).

This sequence belongs to the TRAFAC class TrmE-Era-EngA-EngB-Septin-like GTPase superfamily. EngA (Der) GTPase family. In terms of assembly, associates with the 50S ribosomal subunit.

In terms of biological role, GTPase that plays an essential role in the late steps of ribosome biogenesis. The polypeptide is GTPase Der (Azorhizobium caulinodans (strain ATCC 43989 / DSM 5975 / JCM 20966 / LMG 6465 / NBRC 14845 / NCIMB 13405 / ORS 571)).